Consider the following 473-residue polypeptide: Photosystem II CP43 reaction center protein (473 aa).

The propeptide occupies Met-1 to Glu-14. At Thr-15 the chain carries N-acetylthreonine. Phosphothreonine is present on Thr-15. Helical transmembrane passes span Leu-69 to Ala-93, Leu-134 to Asn-155, Lys-178 to Thr-200, Lys-255 to Ser-275, and Trp-291 to Ala-312. Glu-367 is a binding site for [CaMn4O5] cluster. The helical transmembrane segment at Arg-447 to Pro-471 threads the bilayer.

It belongs to the PsbB/PsbC family. PsbC subfamily. As to quaternary structure, PSII is composed of 1 copy each of membrane proteins PsbA, PsbB, PsbC, PsbD, PsbE, PsbF, PsbH, PsbI, PsbJ, PsbK, PsbL, PsbM, PsbT, PsbX, PsbY, PsbZ, Psb30/Ycf12, at least 3 peripheral proteins of the oxygen-evolving complex and a large number of cofactors. It forms dimeric complexes. Requires Binds multiple chlorophylls and provides some of the ligands for the Ca-4Mn-5O cluster of the oxygen-evolving complex. It may also provide a ligand for a Cl- that is required for oxygen evolution. PSII binds additional chlorophylls, carotenoids and specific lipids. as cofactor.

It is found in the plastid. The protein localises to the chloroplast thylakoid membrane. In terms of biological role, one of the components of the core complex of photosystem II (PSII). It binds chlorophyll and helps catalyze the primary light-induced photochemical processes of PSII. PSII is a light-driven water:plastoquinone oxidoreductase, using light energy to abstract electrons from H(2)O, generating O(2) and a proton gradient subsequently used for ATP formation. This is Photosystem II CP43 reaction center protein from Fagopyrum esculentum subsp. ancestrale (Wild buckwheat).